Reading from the N-terminus, the 759-residue chain is Glucosylceramidase (759 aa).

The active-site Proton donor is the E247. The Nucleophile role is filled by E497. Residues 576-600 (AFENESQRDPQSPAYSESQRNTESY) are disordered. Polar residues predominate over residues 584–599 (DPQSPAYSESQRNTES).

Belongs to the glycosyl hydrolase 5 (cellulase A) family.

Its subcellular location is the membrane. It catalyses the reaction a beta-D-glucosyl-(1&lt;-&gt;1')-N-acylsphing-4-enine + H2O = an N-acylsphing-4-enine + D-glucose. Specifically hydrolyzes the glucosidic linkage in glucosylceramide. May prevent accumulation of aberrent glucosylceramide containing immature ceramide. The chain is Glucosylceramidase from Aspergillus fumigatus (Neosartorya fumigata).